A 609-amino-acid chain; its full sequence is Meiotically up-regulated gene 28 protein (609 aa).

RRM domains lie at 20-103 and 419-499; these read ISIY…YTHI and CNLF…YAEK.

The protein resides in the cytoplasm. Its function is as follows. Has a role in sporulation. In Schizosaccharomyces pombe (strain 972 / ATCC 24843) (Fission yeast), this protein is Meiotically up-regulated gene 28 protein (mug28).